A 439-amino-acid polypeptide reads, in one-letter code: Rhodopsin (439 aa).

A glycan (N-linked (GlcNAc...) asparagine) is linked at Asn-1. The Extracellular portion of the chain corresponds to 1–26 (NETWWYNPYMDIHSHWKQFDQVPAAV). Residues 27-51 (YYSLGIFIAICGIIGCAGNGIVIYL) traverse the membrane as a helical segment. At 52–63 (FTKTKSLQTPAN) the chain is on the cytoplasmic side. A helical membrane pass occupies residues 64 to 90 (MFIINLAFSDFTFSLVNGFPMMTISCF). At 91–102 (LKHWVFGQAACK) the chain is on the extracellular side. Residues Cys-101 and Cys-179 are joined by a disulfide bond. A helical transmembrane segment spans residues 103 to 124 (VYGLIGGIFGLTSIMTMTMISI). A 'Ionic lock' involved in activated form stabilization motif is present at residues 125 to 127 (DRY). Over 125–144 (DRYNVIRRPMSASKKMSHRK) the chain is Cytoplasmic. A helical membrane pass occupies residues 145–165 (AFIMIVFVWIWSTIWAIGPIF). The Extracellular portion of the chain corresponds to 166 to 192 (GWGAYQLEGVLCNCSFDYITRDASTRS). The helical transmembrane segment at 193-217 (NIVCMYIFAFMFPIVVIFFCYFNIV) threads the bilayer. Over 218–254 (MSVSNHEKEMAAMAKRLNAKELRKAQAGASAEMKLAK) the chain is Cytoplasmic. The helical transmembrane segment at 255-276 (ISIVIVTQSLLSWSPYAIVALL) threads the bilayer. Residues 277–286 (AQFGPIEWVT) lie on the Extracellular side of the membrane. A helical membrane pass occupies residues 287-308 (PYAAQLPVMFAKASAIHNPMIY). The residue at position 298 (Lys-298) is an N6-(retinylidene)lysine. Over 309–439 (SVSHPKFREA…PQAAPPQGVD (131 aa)) the chain is Cytoplasmic. Residues Cys-329 and Cys-330 are each lipidated (S-palmitoyl cysteine). Residues 369–381 (MMQKMQAQQQQQP) are compositionally biased toward low complexity. The segment at 369–439 (MMQKMQAQQQ…PQAAPPQGVD (71 aa)) is disordered. The segment covering 382–433 (AYPPQGYPPQGYPPPPPQGYPPQGYPPQGYPPQGYPPPPQGPPPQGPPPQAA) has biased composition (pro residues).

It belongs to the G-protein coupled receptor 1 family. Opsin subfamily. In terms of processing, contains one covalently linked retinal chromophore. Upon light absorption, the covalently bound 11-cis-retinal is converted to all-trans-retinal. After hydrolysis of the Schiff base and release of the covalently bound all-trans-retinal, active rhodopsin is regenerated by binding of a fresh molecule of 11-cis-retinal.

Its subcellular location is the cell projection. It localises to the rhabdomere membrane. Photoreceptor required for image-forming vision at low light intensity. Light-induced isomerization of 11-cis to all-trans retinal triggers a conformational change that activates signaling via G-proteins. Signaling mediates the activation of phospholipase C. Subsequent receptor phosphorylation mediates displacement of the bound G-protein alpha subunit by arrestin and terminates signaling. The polypeptide is Rhodopsin (RHO) (Alloteuthis subulata (Squid)).